We begin with the raw amino-acid sequence, 175 residues long: MTTIITVRKGGKVVMAGDGQVSLGQTVMKGNARKVRRIGKGEVVAGFAGATADAFTLLERLEKKLEQYPGQLMRAAVELAKDWRTDKYLRNLEAMMLVADKSTTLAITGNGDVLEPEHGTTAIGSGGNFAFAAARALMDTDKSAEEIARRALDIAADICVYTNHNIVVESLDVEG.

Threonine 2 is a catalytic residue. Residues alanine 156, cysteine 159, and threonine 162 each contribute to the Na(+) site.

This sequence belongs to the peptidase T1B family. HslV subfamily. In terms of assembly, a double ring-shaped homohexamer of HslV is capped on each side by a ring-shaped HslU homohexamer. The assembly of the HslU/HslV complex is dependent on binding of ATP.

It is found in the cytoplasm. It carries out the reaction ATP-dependent cleavage of peptide bonds with broad specificity.. With respect to regulation, allosterically activated by HslU binding. Its function is as follows. Protease subunit of a proteasome-like degradation complex believed to be a general protein degrading machinery. The chain is ATP-dependent protease subunit HslV from Rhizobium etli (strain CIAT 652).